Consider the following 154-residue polypeptide: Anaerobic ribonucleoside-triphosphate reductase-activating protein (154 aa).

Positions 26, 30, and 33 each coordinate [4Fe-4S] cluster. S-adenosyl-L-methionine contacts are provided by residues 32–34 and G74; that span reads GCY.

It belongs to the organic radical-activating enzymes family. Forms a tetramer composed of two NrdD and two NrdG subunits. The cofactor is [4Fe-4S] cluster.

It localises to the cytoplasm. It catalyses the reaction glycyl-[protein] + reduced [flavodoxin] + S-adenosyl-L-methionine = glycin-2-yl radical-[protein] + semiquinone [flavodoxin] + 5'-deoxyadenosine + L-methionine + H(+). Functionally, activation of anaerobic ribonucleoside-triphosphate reductase under anaerobic conditions by generation of an organic free radical, using S-adenosylmethionine and reduced flavodoxin as cosubstrates to produce 5'-deoxy-adenosine. This chain is Anaerobic ribonucleoside-triphosphate reductase-activating protein (nrdG), found in Salmonella typhimurium (strain LT2 / SGSC1412 / ATCC 700720).